The following is a 455-amino-acid chain: Protein FAM124B (455 aa).

Ser49 carries the phosphoserine modification. A disordered region spans residues 270-322; it reads TSVSAKRTSEPRSQRNQGKRSQGHSLELPEPSGSPTSDRCAGTSWKSPGRSFQ. Positions 313-322 are enriched in polar residues; that stretch reads SWKSPGRSFQ.

This sequence belongs to the FAM124 family. Interacts with CHD7 and CHD8.

The protein resides in the nucleus. In Homo sapiens (Human), this protein is Protein FAM124B (FAM124B).